A 189-amino-acid chain; its full sequence is Protein GrpE (189 aa).

The segment covering 1 to 20 has biased composition (polar residues); sequence MSDQQHSAPQNAAATASPSD. The tract at residues 1–29 is disordered; sequence MSDQQHSAPQNAAATASPSDSPEAVEATM.

The protein belongs to the GrpE family. In terms of assembly, homodimer.

It is found in the cytoplasm. Functionally, participates actively in the response to hyperosmotic and heat shock by preventing the aggregation of stress-denatured proteins, in association with DnaK and GrpE. It is the nucleotide exchange factor for DnaK and may function as a thermosensor. Unfolded proteins bind initially to DnaJ; upon interaction with the DnaJ-bound protein, DnaK hydrolyzes its bound ATP, resulting in the formation of a stable complex. GrpE releases ADP from DnaK; ATP binding to DnaK triggers the release of the substrate protein, thus completing the reaction cycle. Several rounds of ATP-dependent interactions between DnaJ, DnaK and GrpE are required for fully efficient folding. This Paracidovorax citrulli (strain AAC00-1) (Acidovorax citrulli) protein is Protein GrpE.